A 226-amino-acid chain; its full sequence is N-(5'-phosphoribosyl)anthranilate isomerase (226 aa).

This sequence belongs to the TrpF family.

The catalysed reaction is N-(5-phospho-beta-D-ribosyl)anthranilate = 1-(2-carboxyphenylamino)-1-deoxy-D-ribulose 5-phosphate. It participates in amino-acid biosynthesis; L-tryptophan biosynthesis; L-tryptophan from chorismate: step 3/5. This Methanocaldococcus jannaschii (strain ATCC 43067 / DSM 2661 / JAL-1 / JCM 10045 / NBRC 100440) (Methanococcus jannaschii) protein is N-(5'-phosphoribosyl)anthranilate isomerase (trpF).